The sequence spans 335 residues: Mitochondrial fission regulator 1 (335 aa).

The transit peptide at 1–48 (MIRWFKCFMRMIFEQVGLNMESVLWSSKPYGSSRSIVRKIGTNLSLIQ) directs the protein to the mitochondrion. Positions 134-170 (RSTVIANEEAMQKISALENELATLRAQIAKIVILQEQ) form a coiled coil. The segment at 182-309 (ASAAVPCVPP…DKVIPKSETN (128 aa)) is necessary and sufficient to promote mitochondrial fission. A disordered region spans residues 219–240 (RKNRKTNSGPIPTENGPKKPEI).

Belongs to the MTFR1 family. Widely expressed in embryonic tissues with higher expression in cartilage and hypertrophic chondrocytes. Specifically expressed in hypertrophic chondrocytes (at protein level).

The protein resides in the mitochondrion. Its function is as follows. May play a role in mitochondrial aerobic respiration. May also regulate mitochondrial organization and fission. This Gallus gallus (Chicken) protein is Mitochondrial fission regulator 1 (MTFR1).